Reading from the N-terminus, the 242-residue chain is MNAEKTSVAPNVDHAEIAKFEAVASRWWDLEGEFKPLHRINPLRLGYIAERSGGLFGKKVLDVGCGGGILAESMAREGATVTGLDMGAEPLQVARLHALESGIQVDYVQETVEEHAAKHPQQYDVVTCMEMLEHVPDPQSVVHACARLVKPGGQVFFSTINRNGKAWLMAVVGAEYVMKMVPKGTHDVKKFIKPAELLGWVDQTTLKEQHIIGLHYNPLTNTFKLAPGVDVNYMLHTTAKQD.

S-adenosyl-L-methionine contacts are provided by arginine 44, glycine 64, aspartate 85, and methionine 129.

This sequence belongs to the methyltransferase superfamily. UbiG/COQ3 family.

It catalyses the reaction a 3-demethylubiquinol + S-adenosyl-L-methionine = a ubiquinol + S-adenosyl-L-homocysteine + H(+). It carries out the reaction a 3-(all-trans-polyprenyl)benzene-1,2-diol + S-adenosyl-L-methionine = a 2-methoxy-6-(all-trans-polyprenyl)phenol + S-adenosyl-L-homocysteine + H(+). The protein operates within cofactor biosynthesis; ubiquinone biosynthesis. O-methyltransferase that catalyzes the 2 O-methylation steps in the ubiquinone biosynthetic pathway. The sequence is that of Ubiquinone biosynthesis O-methyltransferase from Klebsiella pneumoniae subsp. pneumoniae (strain ATCC 700721 / MGH 78578).